A 182-amino-acid chain; its full sequence is ATP-dependent protease subunit HslV (182 aa).

Residue threonine 12 is part of the active site. Residues alanine 167, cysteine 170, and threonine 173 each coordinate Na(+).

This sequence belongs to the peptidase T1B family. HslV subfamily. In terms of assembly, a double ring-shaped homohexamer of HslV is capped on each side by a ring-shaped HslU homohexamer. The assembly of the HslU/HslV complex is dependent on binding of ATP.

The protein resides in the cytoplasm. It carries out the reaction ATP-dependent cleavage of peptide bonds with broad specificity.. With respect to regulation, allosterically activated by HslU binding. In terms of biological role, protease subunit of a proteasome-like degradation complex believed to be a general protein degrading machinery. This chain is ATP-dependent protease subunit HslV, found in Pelodictyon phaeoclathratiforme (strain DSM 5477 / BU-1).